We begin with the raw amino-acid sequence, 1161 residues long: Immunoglobulin superfamily member 3 (1161 aa).

Residues 1-16 (MGTAALLILLAGVSWA) form the signal peptide. At 17–1091 (QREVAIQPGP…LQSTICANDA (1075 aa)) the chain is on the extracellular side. 8 Ig-like C2-type domains span residues 18–135 (REVA…AKVN), 140–258 (PDTL…WFPL), 272–382 (PTDK…RGPS), 402–523 (PLRT…WQLL), 541–651 (FAVT…RETS), 674–796 (PRLQ…EETS), 806–930 (PDAN…WYRR), and 947–1063 (PQLQ…WYLL). Disulfide bonds link cysteine 39/cysteine 117 and cysteine 164/cysteine 242. Positions 246–248 (EWI) match the EWI motif motif. Intrachain disulfides connect cysteine 298–cysteine 372, cysteine 428–cysteine 507, cysteine 562–cysteine 641, cysteine 697–cysteine 775, cysteine 831–cysteine 914, and cysteine 970–cysteine 1047. Residues 1092-1112 (LFYLVFFYPFPIFGILIITIL) form a helical membrane-spanning segment. Residues 1113–1161 (LVRFRHRPTGKPGEGKNGVPLLWIKEPHLNYSPTCLEPPVLSIHPGTID) lie on the Cytoplasmic side of the membrane.

The protein resides in the membrane. In Xenopus tropicalis (Western clawed frog), this protein is Immunoglobulin superfamily member 3 (igsf3).